The primary structure comprises 289 residues: 4-diphosphocytidyl-2-C-methyl-D-erythritol kinase (289 aa).

The active site involves K10. 94–104 (PVAAGLAGGSS) contributes to the ATP binding site. D136 is a catalytic residue.

It belongs to the GHMP kinase family. IspE subfamily.

The catalysed reaction is 4-CDP-2-C-methyl-D-erythritol + ATP = 4-CDP-2-C-methyl-D-erythritol 2-phosphate + ADP + H(+). It participates in isoprenoid biosynthesis; isopentenyl diphosphate biosynthesis via DXP pathway; isopentenyl diphosphate from 1-deoxy-D-xylulose 5-phosphate: step 3/6. Its function is as follows. Catalyzes the phosphorylation of the position 2 hydroxy group of 4-diphosphocytidyl-2C-methyl-D-erythritol. The chain is 4-diphosphocytidyl-2-C-methyl-D-erythritol kinase from Bacillus anthracis (strain CDC 684 / NRRL 3495).